Here is a 347-residue protein sequence, read N- to C-terminus: Ataxin-7-like protein 3 (347 aa).

The SGF11-type zinc finger occupies 84–105 (CVCPNCSRSIAASRFAPHLEKC). Residues 116-125 (ANRRIANSNN) are compositionally biased toward low complexity. Residues 116-184 (ANRRIANSNN…GELSNSDPFK (69 aa)) are disordered. 2 positions are modified to phosphoserine: S129 and S131. Positions 132–141 (DQEDNDDIND) are enriched in acidic residues. The SCA7 domain maps to 196 to 263 (LGPEELRSLL…SLDNDSFDMT (68 aa)). A compositionally biased stretch (low complexity) spans 275–288 (DGSSDLSPSDSGSS). Residues 275-347 (DGSSDLSPSD…PTPSIYDDIN (73 aa)) form a disordered region. Phosphoserine is present on residues S278, S281, and S326.

This sequence belongs to the SGF11 family. Component of some SAGA transcription coactivator-HAT complexes, at least composed of ATXN7, ATXN7L3, ENY2, GCN5L2, SUPT3H, TAF10, TRRAP and USP22. Within the SAGA complex, ENY2, ATXN7, ATXN7L3, and USP22 form an additional subcomplex of SAGA called the DUB module (deubiquitination module). Interacts directly with ENY2 and USP22.

Its subcellular location is the nucleus. Functionally, component of the transcription regulatory histone acetylation (HAT) complex SAGA, a multiprotein complex that activates transcription by remodeling chromatin and mediating histone acetylation and deubiquitination. Within the SAGA complex, participates in a subcomplex that specifically deubiquitinates both histones H2A and H2B. The SAGA complex is recruited to specific gene promoters by activators such as MYC, where it is required for transcription. Required for nuclear receptor-mediated transactivation. Within the complex, it is required to recruit USP22 and ENY2 into the SAGA complex. Regulates H2B monoubiquitination (H2Bub1) levels. Affects subcellular distribution of ENY2, USP22 and ATXN7L3B. The polypeptide is Ataxin-7-like protein 3 (Homo sapiens (Human)).